We begin with the raw amino-acid sequence, 341 residues long: L-threonine 3-dehydrogenase (341 aa).

Cysteine 38 contacts Zn(2+). Residues threonine 40 and histidine 43 each act as charge relay system in the active site. Zn(2+) is bound by residues histidine 63, glutamate 64, cysteine 93, cysteine 96, cysteine 99, and cysteine 107. NAD(+)-binding positions include isoleucine 175, aspartate 195, arginine 200, 262–264 (LGI), and 286–287 (IY).

This sequence belongs to the zinc-containing alcohol dehydrogenase family. In terms of assembly, homotetramer. Zn(2+) is required as a cofactor.

Its subcellular location is the cytoplasm. It catalyses the reaction L-threonine + NAD(+) = (2S)-2-amino-3-oxobutanoate + NADH + H(+). Its pathway is amino-acid degradation; L-threonine degradation via oxydo-reductase pathway; glycine from L-threonine: step 1/2. Its function is as follows. Catalyzes the NAD(+)-dependent oxidation of L-threonine to 2-amino-3-ketobutyrate. This chain is L-threonine 3-dehydrogenase, found in Yersinia pestis bv. Antiqua (strain Antiqua).